Consider the following 122-residue polypeptide: Putative MOB kinase activator-like 2B (122 aa).

Residues His-69 and His-74 each coordinate Zn(2+).

Belongs to the MOB1/phocein family.

It is found in the nucleus. The protein resides in the cytoplasm. The protein localises to the cytoskeleton. It localises to the phragmoplast. The chain is Putative MOB kinase activator-like 2B from Arabidopsis thaliana (Mouse-ear cress).